Reading from the N-terminus, the 281-residue chain is ATP synthase gamma chain (281 aa).

Belongs to the ATPase gamma chain family. As to quaternary structure, F-type ATPases have 2 components, CF(1) - the catalytic core - and CF(0) - the membrane proton channel. CF(1) has five subunits: alpha(3), beta(3), gamma(1), delta(1), epsilon(1). CF(0) has three main subunits: a, b and c.

The protein resides in the cell inner membrane. Functionally, produces ATP from ADP in the presence of a proton gradient across the membrane. The gamma chain is believed to be important in regulating ATPase activity and the flow of protons through the CF(0) complex. The protein is ATP synthase gamma chain of Ehrlichia chaffeensis (strain ATCC CRL-10679 / Arkansas).